Reading from the N-terminus, the 653-residue chain is Chaperone protein DnaK (653 aa).

At threonine 198 the chain carries Phosphothreonine; by autocatalysis. Over residues 608 to 617 (DPEAAAHAAG) the composition is skewed to low complexity. The tract at residues 608-653 (DPEAAAHAAGMHGGAATGGGDGANKHGKGAEDVVEAEFEEVNDDKK) is disordered. Residues 618-629 (MHGGAATGGGDG) show a composition bias toward gly residues. Residues 639 to 653 (DVVEAEFEEVNDDKK) are compositionally biased toward acidic residues.

Belongs to the heat shock protein 70 family.

Its function is as follows. Acts as a chaperone. This chain is Chaperone protein DnaK, found in Magnetococcus marinus (strain ATCC BAA-1437 / JCM 17883 / MC-1).